A 159-amino-acid chain; its full sequence is Ribonuclease H (159 aa).

The 145-residue stretch at 1–145 (MTHIRAIYTD…CDLIARRLSR (145 aa)) folds into the RNase H type-1 domain. Mg(2+)-binding residues include D10, E49, D74, and D137.

The protein belongs to the RNase H family. Monomer. Mg(2+) serves as cofactor.

It is found in the cytoplasm. It catalyses the reaction Endonucleolytic cleavage to 5'-phosphomonoester.. Endonuclease that specifically degrades the RNA of RNA-DNA hybrids. In Thermosynechococcus vestitus (strain NIES-2133 / IAM M-273 / BP-1), this protein is Ribonuclease H.